The sequence spans 484 residues: MLIFELSKTGRQAKAQIPRAVSKNYSIPEEFQRKSPPRLPACSELQVVRHFTCLSQKNFSIDTNFYPLGSCTMKYNPRGVHKAASLPGFINRHPLAMDNESQGFLETLYKLQNYISEITGMPGVSLTPMAGSQGEFAGVAMIKAYHQSRGDTARDEILIPDAAHGTNPASAVMCGFKVVEIATAPDGDIDLDELKRKVGPRTAGIMLTNPSTLGLFMRQIKEIANLVHQAGGLLYYDGANLNAILGKVRPGDMGFDVMHLNLHKTFATPHGGGGPGAGPVAVGKRLIPYMPLPVVKKTDSGYHWATRQDYPQSIGRLSCFMGNAGILLRAYFYMLVLGKEGLLRVSEFATLNANYLLKELTKVGYTAAYPGRRASHEFILTLNSEKKNYDVTAMDFAKRLLDYGVHAPTTYFPLLVPECLLIEPPETESKEELDAFVAVMKTIREEAIKQPDILKAAPHTLPVKRLDDVKAARELDLNYFATHE.

At K264 the chain carries N6-(pyridoxal phosphate)lysine.

The protein belongs to the GcvP family. C-terminal subunit subfamily. In terms of assembly, the glycine cleavage system is composed of four proteins: P, T, L and H. In this organism, the P 'protein' is a heterodimer of two subunits. Pyridoxal 5'-phosphate is required as a cofactor.

The catalysed reaction is N(6)-[(R)-lipoyl]-L-lysyl-[glycine-cleavage complex H protein] + glycine + H(+) = N(6)-[(R)-S(8)-aminomethyldihydrolipoyl]-L-lysyl-[glycine-cleavage complex H protein] + CO2. In terms of biological role, the glycine cleavage system catalyzes the degradation of glycine. The P protein binds the alpha-amino group of glycine through its pyridoxal phosphate cofactor; CO(2) is released and the remaining methylamine moiety is then transferred to the lipoamide cofactor of the H protein. This Legionella pneumophila (strain Paris) protein is Probable glycine dehydrogenase (decarboxylating) subunit 2.